Reading from the N-terminus, the 827-residue chain is Glycerol-3-phosphate acyltransferase 1, mitochondrial (827 aa).

Residues 1–87 (MEESSVTVGT…FFNPSIPSLG (87 aa)) are Cytoplasmic-facing. The segment at 80–120 (NPSIPSLGLRNVIYINETHTRHRGWLARRLSYILFVQERDV) is important for mitochondrial localization. The stretch at 88–118 (LRNVIYINETHTRHRGWLARRLSYILFVQER) is an intramembrane region. At 119-827 (DVHKGMFATS…LEYILSFVVL (709 aa)) the chain is on the cytoplasmic side. Positions 230-235 (HRSHID) match the HXXXXD motif motif. R278, R279, K288, R293, and R328 together coordinate CoA. S380 bears the Phosphoserine mark. R462 contacts CoA. A phosphoserine mark is found at S687 and S694. An N6-acetyllysine mark is found at K779 and K783.

The protein belongs to the GPAT/DAPAT family. As to expression, highest levels in liver, intermediate levels in muscle and kidney, and lowest levels in lung and brain.

It localises to the mitochondrion outer membrane. It catalyses the reaction sn-glycerol 3-phosphate + an acyl-CoA = a 1-acyl-sn-glycero-3-phosphate + CoA. It carries out the reaction (9Z,12Z)-octadecadienoyl-CoA + sn-glycerol 3-phosphate = 1-(9Z,12Z)-octadecadienoyl-sn-glycero-3-phosphate + CoA. The catalysed reaction is sn-glycerol 3-phosphate + (9Z)-octadecenoyl-CoA = 1-(9Z-octadecenoyl)-sn-glycero-3-phosphate + CoA. The enzyme catalyses sn-glycerol 3-phosphate + octadecanoyl-CoA = 1-octadecanoyl-sn-glycero-3-phosphate + CoA. It catalyses the reaction sn-glycerol 3-phosphate + hexadecanoyl-CoA = 1-hexadecanoyl-sn-glycero-3-phosphate + CoA. It carries out the reaction dodecanoyl-CoA + sn-glycerol 3-phosphate = 1-dodecanoyl-sn-glycerol 3-phosphate + CoA. The catalysed reaction is 1-acyl-sn-glycero-3-phospho-(1'-sn-glycerol) + an acyl-CoA = a 1,2-diacyl-sn-glycero-3-phospho-(1'-sn-glycerol) + CoA. It participates in phospholipid metabolism; CDP-diacylglycerol biosynthesis; CDP-diacylglycerol from sn-glycerol 3-phosphate: step 1/3. Functionally, mitochondrial membrane protein that catalyzes the essential first step of biosynthesis of glycerolipids such as triglycerides, phosphatidic acids and lysophosphatidic acids. Esterifies acyl-group from acyl-coenzyme A (acyl-CoA) to the sn-1 position of glycerol-3-phosphate, to produce lysophosphatidic acid. Has a narrow hydrophobic binding cleft that selects for a linear acyl chain. Catalytic activity is higher for substrates with a 16-carbon acyl chain. The protein is Glycerol-3-phosphate acyltransferase 1, mitochondrial of Mus musculus (Mouse).